The sequence spans 457 residues: Asparagine--tRNA ligase (457 aa).

Belongs to the class-II aminoacyl-tRNA synthetase family. Homodimer.

It localises to the cytoplasm. It carries out the reaction tRNA(Asn) + L-asparagine + ATP = L-asparaginyl-tRNA(Asn) + AMP + diphosphate + H(+). The polypeptide is Asparagine--tRNA ligase (Phytoplasma australiense).